A 148-amino-acid polypeptide reads, in one-letter code: UPF0260 protein YcgN (148 aa).

The protein belongs to the UPF0260 family.

The sequence is that of UPF0260 protein YcgN from Salmonella paratyphi A (strain AKU_12601).